The sequence spans 339 residues: RNA polymerase principal sigma factor HrdC (339 aa).

The segment covering Met1–Ala10 has biased composition (low complexity). Disordered regions lie at residues Met1–Asp37 and Arg71–Glu101. A compositionally biased stretch (basic and acidic residues) spans Thr91–Glu101. The short motif at Asp130–Val143 is the Polymerase core binding element. The H-T-H motif DNA-binding region spans Leu300–Lys319.

The protein belongs to the sigma-70 factor family. Interacts transiently with the RNA polymerase catalytic core.

Functionally, sigma factors are initiation factors that promote the attachment of RNA polymerase to specific initiation sites and are then released. The chain is RNA polymerase principal sigma factor HrdC (hrdC) from Streptomyces coelicolor (strain ATCC BAA-471 / A3(2) / M145).